Consider the following 777-residue polypeptide: BRCA1-associated RING domain protein 1 (777 aa).

A disordered region spans residues 1 to 32 (MPDNRQPRNRQPRIRSGNEPRSAPAMEPDGRG). Positions 26–119 (MEPDGRGAWA…KLRNLLHDNE (94 aa)) are interaction with BRCA1. The RING-type zinc finger occupies 50 to 87 (CSRCTNILREPVCLGGCEHIFCSNCVSDCIGTGCPVCY). Glycyl lysine isopeptide (Lys-Gly) (interchain with G-Cter in SUMO2) cross-links involve residues Lys160 and Lys170. Positions 167–211 (PAIKKDASAQQDSYEFVSPSPPADVSERAKKASARSGKKQKKKTL) are disordered. Ser186 bears the Phosphoserine mark. The span at 197 to 209 (KASARSGKKQKKK) shows a compositional bias: basic residues. Phosphothreonine is present on Thr299. The tract at residues 356–404 (NIPLPECSSPPSCKRKVGGTSGRKNSNMSDEFISLSPGTPPSTLSSSSY) is disordered. The segment covering 389–404 (SLSPGTPPSTLSSSSY) has biased composition (low complexity). Ser391 carries the post-translational modification Phosphoserine. At Thr394 the chain carries Phosphothreonine. Lys423 is covalently cross-linked (Glycyl lysine isopeptide (Lys-Gly) (interchain with G-Cter in SUMO2)). ANK repeat units follow at residues 427-459 (RGETLLHIASIKGDIPSVEYLLQNGSDPNVKDH), 460-492 (AGWTPLHEACNHGHLKVVELLLQHKALVNTTGY), and 493-525 (QNDSPLHDAAKNGHVDIVKLLLSYGASRNAVNI). The stretch at 526–546 (FGLRPVDYTDDESMKSLLLLP) is one ANK 4; degenerate repeat. Lys548 is covalently cross-linked (Glycyl lysine isopeptide (Lys-Gly) (interchain with G-Cter in SUMO2)). The interval 554–558 (ASHCS) is flexible linker. 2 consecutive BRCT domains span residues 560–653 (MNTG…KYEI) and 667–777 (LLPK…PLDS).

In terms of assembly, homo- and heterodimer. Heterodimer (RING-type zinc finger) with BRCA1. Heterodimer (via ANK repeats and BRCT domains) with CSTF1/CSTF-50. Component of the BRCA1-A complex, at least composed of the BRCA1, BARD1, UIMC1/RAP80, ABRAXAS1, BRCC3/BRCC36, BABAM2 and BABAM1/NBA1. Interacts with UBXN1. Post-translationally, processed during apoptosis. The homodimer is more susceptible to proteolytic cleavage than the BARD1/BRCA1 heterodimer.

The protein resides in the nucleus. The catalysed reaction is S-ubiquitinyl-[E2 ubiquitin-conjugating enzyme]-L-cysteine + [acceptor protein]-L-lysine = [E2 ubiquitin-conjugating enzyme]-L-cysteine + N(6)-ubiquitinyl-[acceptor protein]-L-lysine.. The protein operates within protein modification; protein ubiquitination. Functionally, E3 ubiquitin-protein ligase. The BRCA1-BARD1 heterodimer specifically mediates the formation of 'Lys-6'-linked polyubiquitin chains and coordinates a diverse range of cellular pathways such as DNA damage repair, ubiquitination and transcriptional regulation to maintain genomic stability. Plays a central role in the control of the cell cycle in response to DNA damage. Acts by mediating ubiquitin E3 ligase activity that is required for its tumor suppressor function. Also forms a heterodimer with CSTF1/CSTF-50 to modulate mRNA processing and RNAP II stability by inhibiting pre-mRNA 3' cleavage. In Homo sapiens (Human), this protein is BRCA1-associated RING domain protein 1 (BARD1).